Here is a 968-residue protein sequence, read N- to C-terminus: Ribonuclease E (968 aa).

The S1 motif domain occupies S39–F119. Mg(2+) is bound by residues D303 and D346. The Zn(2+) site is built by C404 and C407. The tract at residues C404–C407 is required for zinc-mediated homotetramerization and catalytic activity. Residues I947–E968 form a disordered region. Positions S955–E968 are enriched in polar residues.

This sequence belongs to the RNase E/G family. RNase E subfamily. In terms of assembly, component of the RNA degradosome, which is a multiprotein complex involved in RNA processing and mRNA degradation. Within the RNA degradosome, RNase E assembles into a homotetramer formed by a dimer of dimers. Zn(2+) is required as a cofactor. The cofactor is Mg(2+).

The protein localises to the cytoplasm. It is found in the cell inner membrane. It catalyses the reaction Endonucleolytic cleavage of single-stranded RNA in A- and U-rich regions.. Its function is as follows. Endoribonuclease that plays a central role in RNA processing and decay. Required for the maturation of 5S and 16S rRNAs and the majority of tRNAs. Also involved in the degradation of most mRNAs. The chain is Ribonuclease E from Buchnera aphidicola subsp. Schizaphis graminum (strain Sg).